A 310-amino-acid polypeptide reads, in one-letter code: Pantothenate kinase (310 aa).

95–102 (GSVAVGKS) serves as a coordination point for ATP.

Belongs to the prokaryotic pantothenate kinase family.

The protein localises to the cytoplasm. The catalysed reaction is (R)-pantothenate + ATP = (R)-4'-phosphopantothenate + ADP + H(+). It functions in the pathway cofactor biosynthesis; coenzyme A biosynthesis; CoA from (R)-pantothenate: step 1/5. This Rhodococcus opacus (strain B4) protein is Pantothenate kinase.